Here is a 394-residue protein sequence, read N- to C-terminus: 12-oxophytodienoate reductase 7 (394 aa).

Residues 35 to 37 (PMT) and Q110 contribute to the FMN site. 189–192 (HGAH) provides a ligand contact to substrate. Catalysis depends on Y194, which acts as the Proton donor. R241 is an FMN binding site. R286 is a substrate binding site. FMN is bound by residues G324 and 345–346 (GR). The Microbody targeting signal motif lies at 392–394 (SRM).

This sequence belongs to the NADH:flavin oxidoreductase/NADH oxidase family. It depends on FMN as a cofactor.

The protein resides in the peroxisome. The enzyme catalyses (1S,2S)-OPC-8 + NADP(+) = (9S,13S,15Z)-12-oxophyto-10,15-dienoate + NADPH + H(+). It participates in lipid metabolism; oxylipin biosynthesis. Its function is as follows. Involved in the biosynthesis of jasmonate (JA) and perhaps in biosynthesis or metabolism of other oxylipin signaling moleclules. In vitro, reduces cis(+)-12-oxophytodienoic acid (cis(+)-OPDA) and cis(-)-OPDA to cis(+)-OPC-8:0 and cis(-)-OPC-8:0, respectively. May be required for the spatial and temporal regulation of JA levels during dehiscence of anthers, promoting the stomium degeneration program. Involved in carbohydrate transport underlying normal lodicule function during anthesis. The polypeptide is 12-oxophytodienoate reductase 7 (Oryza sativa subsp. japonica (Rice)).